Consider the following 250-residue polypeptide: 3-deoxy-manno-octulosonate cytidylyltransferase (250 aa).

The protein belongs to the KdsB family.

Its subcellular location is the cytoplasm. It catalyses the reaction 3-deoxy-alpha-D-manno-oct-2-ulosonate + CTP = CMP-3-deoxy-beta-D-manno-octulosonate + diphosphate. It functions in the pathway nucleotide-sugar biosynthesis; CMP-3-deoxy-D-manno-octulosonate biosynthesis; CMP-3-deoxy-D-manno-octulosonate from 3-deoxy-D-manno-octulosonate and CTP: step 1/1. It participates in bacterial outer membrane biogenesis; lipopolysaccharide biosynthesis. Functionally, activates KDO (a required 8-carbon sugar) for incorporation into bacterial lipopolysaccharide in Gram-negative bacteria. In Janthinobacterium sp. (strain Marseille) (Minibacterium massiliensis), this protein is 3-deoxy-manno-octulosonate cytidylyltransferase.